The primary structure comprises 1088 residues: RNA-directed RNA polymerase (1088 aa).

The 187-residue stretch at 501–687 (LSYGDVTRFL…AKRYIAGGKI (187 aa)) folds into the RdRp catalytic domain.

The protein belongs to the reoviridae RNA-directed RNA polymerase family. Interacts with VP3 (Potential). Interacts with VP2; this interaction activates VP1. Interacts with NSP5; this interaction is probably necessary for the formation of functional virus factories. Interacts with NSP2; this interaction is weak. The cofactor is Mg(2+).

It is found in the virion. It catalyses the reaction RNA(n) + a ribonucleoside 5'-triphosphate = RNA(n+1) + diphosphate. Functionally, RNA-directed RNA polymerase that is involved in both transcription and genome replication. Together with VP3 capping enzyme, forms an enzyme complex positioned near the channels situated at each of the five-fold vertices of the core. Following infection, the outermost layer of the virus is lost, leaving a double-layered particle (DLP) made up of the core and VP6 shell. VP1 then catalyzes the transcription of fully conservative plus-strand genomic RNAs that are extruded through the DLP's channels into the cytoplasm where they function as mRNAs for translation of viral proteins. One copy of each of the viral (+)RNAs is also recruited during core assembly, together with newly synthesized polymerase complexes and VP2. The polymerase of these novo-formed particles catalyzes the synthesis of complementary minus-strands leading to dsRNA formation. To do so, the polymerase specifically recognizes and binds 4 bases 5'-UGUG-3' in the conserved 3'-sequence of plus-strand RNA templates. VP2 presumably activates the autoinhibited VP1-RNA complex to coordinate packaging and genome replication. Once dsRNA synthesis is complete, the polymerase switches to the transcriptional mode, thus providing secondary transcription. The protein is RNA-directed RNA polymerase of Homo sapiens (Human).